Consider the following 417-residue polypeptide: NADH-quinone oxidoreductase subunit D (417 aa).

It belongs to the complex I 49 kDa subunit family. In terms of assembly, NDH-1 is composed of 14 different subunits. Subunits NuoB, C, D, E, F, and G constitute the peripheral sector of the complex.

Its subcellular location is the cell inner membrane. The enzyme catalyses a quinone + NADH + 5 H(+)(in) = a quinol + NAD(+) + 4 H(+)(out). Its function is as follows. NDH-1 shuttles electrons from NADH, via FMN and iron-sulfur (Fe-S) centers, to quinones in the respiratory chain. The immediate electron acceptor for the enzyme in this species is believed to be ubiquinone. Couples the redox reaction to proton translocation (for every two electrons transferred, four hydrogen ions are translocated across the cytoplasmic membrane), and thus conserves the redox energy in a proton gradient. In Francisella tularensis subsp. mediasiatica (strain FSC147), this protein is NADH-quinone oxidoreductase subunit D.